A 181-amino-acid polypeptide reads, in one-letter code: Large ribosomal subunit protein uL5 (181 aa).

The protein belongs to the universal ribosomal protein uL5 family. In terms of assembly, part of the 50S ribosomal subunit; part of the 5S rRNA/L5/L18/L25 subcomplex. Contacts the 5S rRNA and the P site tRNA. Forms a bridge to the 30S subunit in the 70S ribosome.

In terms of biological role, this is one of the proteins that bind and probably mediate the attachment of the 5S RNA into the large ribosomal subunit, where it forms part of the central protuberance. In the 70S ribosome it contacts protein S13 of the 30S subunit (bridge B1b), connecting the 2 subunits; this bridge is implicated in subunit movement. Contacts the P site tRNA; the 5S rRNA and some of its associated proteins might help stabilize positioning of ribosome-bound tRNAs. The chain is Large ribosomal subunit protein uL5 from Acaryochloris marina (strain MBIC 11017).